The following is a 313-amino-acid chain: Aspartate carbamoyltransferase catalytic subunit (313 aa).

Residues R58 and T59 each coordinate carbamoyl phosphate. K86 provides a ligand contact to L-aspartate. 3 residues coordinate carbamoyl phosphate: R108, H136, and Q139. L-aspartate contacts are provided by R169 and R223. Carbamoyl phosphate is bound by residues G264 and P265.

It belongs to the aspartate/ornithine carbamoyltransferase superfamily. ATCase family. In terms of assembly, heterododecamer (2C3:3R2) of six catalytic PyrB chains organized as two trimers (C3), and six regulatory PyrI chains organized as three dimers (R2).

It carries out the reaction carbamoyl phosphate + L-aspartate = N-carbamoyl-L-aspartate + phosphate + H(+). Its pathway is pyrimidine metabolism; UMP biosynthesis via de novo pathway; (S)-dihydroorotate from bicarbonate: step 2/3. In terms of biological role, catalyzes the condensation of carbamoyl phosphate and aspartate to form carbamoyl aspartate and inorganic phosphate, the committed step in the de novo pyrimidine nucleotide biosynthesis pathway. The polypeptide is Aspartate carbamoyltransferase catalytic subunit (Halothermothrix orenii (strain H 168 / OCM 544 / DSM 9562)).